We begin with the raw amino-acid sequence, 244 residues long: 14-3-3 protein beta/alpha (244 aa).

At M1 the chain carries N-acetylmethionine. S184 is modified (phosphoserine).

This sequence belongs to the 14-3-3 family. In terms of assembly, homodimer, and heterodimer with other family members. Phosphorylated.

The protein localises to the cytoplasm. Functionally, adapter protein implicated in the regulation of a large spectrum of both general and specialized signaling pathways. Binds to a large number of partners, usually by recognition of a phosphoserine or phosphothreonine motif. Binding generally results in the modulation of the activity of the binding partner. The polypeptide is 14-3-3 protein beta/alpha (YWHAB) (Gallus gallus (Chicken)).